A 607-amino-acid polypeptide reads, in one-letter code: Serum albumin (607 aa).

The signal sequence occupies residues 1–16 (MKWTILTALLIISAES). A propeptide spanning residues 17 to 20 (KNLY) is cleaved from the precursor. Albumin domains lie at 19–209 (LYKR…TQLK), 210–401 (KALH…HVLA), and 403–600 (AIKE…ILIE). Histidine 27 contributes to the Cu cation binding site. Intrachain disulfides connect cysteine 77–cysteine 86, cysteine 99–cysteine 115, cysteine 114–cysteine 125, cysteine 147–cysteine 192, cysteine 191–cysteine 200, cysteine 223–cysteine 269, cysteine 268–cysteine 276, cysteine 288–cysteine 302, cysteine 301–cysteine 312, cysteine 339–cysteine 384, cysteine 383–cysteine 392, cysteine 415–cysteine 461, cysteine 460–cysteine 471, cysteine 484–cysteine 500, cysteine 499–cysteine 510, cysteine 537–cysteine 582, and cysteine 581–cysteine 590. Residues histidine 270 and aspartate 272 each coordinate Zn(2+). Ca(2+)-binding residues include aspartate 272 and glutamate 275.

This sequence belongs to the ALB/AFP/VDB family. Plasma. In the skin, widely distributed around the membranes of epithelial layer cells and within the stratum spongiosum of the dermis (at protein level).

The protein resides in the secreted. Serum albumin, the main protein of plasma, has a good binding capacity for water, Ca(2+), Na(+), K(+), fatty acids, hormones, bilirubin and drugs. Its main function is the regulation of the colloidal osmotic pressure of blood. Potent inhibitor of trypsin but has no inhibitory effect on thrombin, chymotrypsin, elastase and subtilisin. The chain is Serum albumin from Bombina maxima (Giant fire-bellied toad).